Reading from the N-terminus, the 1272-residue chain is AF4/FMR2 family member 2 (1272 aa).

Disordered regions lie at residues I93–D183, Q201–A225, and A283–K302. Residues S97–E107 are compositionally biased toward polar residues. Basic and acidic residues predominate over residues S151–H160. Polar residues predominate over residues N161–D183. The residue at position 391 (S391) is a Phosphoserine. Disordered stretches follow at residues K418–L491, T535–E687, S779–K829, and P842–N903. A compositionally biased stretch (pro residues) spans V426–A438. The segment covering V439–E452 has biased composition (low complexity). Phosphothreonine is present on T478. Over residues E543 to R558 the composition is skewed to basic and acidic residues. Positions S576 to T586 are enriched in polar residues. Residues P616–R629 show a composition bias toward basic and acidic residues. Basic residues predominate over residues G630–A640. Residues P818–K829 show a composition bias toward basic and acidic residues. Composition is skewed to pro residues over residues C844–P853 and F874–E883.

It belongs to the AF4 family.

The protein localises to the nucleus speckle. RNA-binding protein. Might be involved in alternative splicing regulation through an interaction with G-quartet RNA structure. In Pan troglodytes (Chimpanzee), this protein is AF4/FMR2 family member 2 (AFF2).